We begin with the raw amino-acid sequence, 419 residues long: uncharacterized protein (419 aa).

In terms of domain architecture, Obg spans 29 to 236 (PKFQDKIRIR…KLIELELKTI (208 aa)). The OBG-type G domain occupies 237-414 (CEIGLVGLPN…LVRGMTQLLQ (178 aa)). Residues 243 to 250 (GLPNAGKS), 295 to 299 (DIPGI), and 364 to 367 (ANKA) contribute to the GTP site.

This sequence belongs to the TRAFAC class OBG-HflX-like GTPase superfamily. OBG GTPase family.

It localises to the mitochondrion. This is an uncharacterized protein from Schizosaccharomyces pombe (strain 972 / ATCC 24843) (Fission yeast).